A 190-amino-acid polypeptide reads, in one-letter code: Inner membrane-spanning protein YciB (190 aa).

The next 6 membrane-spanning stretches (helical) occupy residues 3-23, 24-44, 49-69, 76-96, 121-141, and 149-169; these read FLFD…AGIY, VATT…WFKH, AMQW…LIFH, WKPT…VVVV, LVWA…AYNF, and FKLF…SVWL.

This sequence belongs to the YciB family.

The protein localises to the cell inner membrane. Functionally, plays a role in cell envelope biogenesis, maintenance of cell envelope integrity and membrane homeostasis. The sequence is that of Inner membrane-spanning protein YciB from Ralstonia pickettii (strain 12J).